Here is a 525-residue protein sequence, read N- to C-terminus: AarF domain-containing protein kinase 1 (525 aa).

Residues 148-477 (SFDDTPLGAA…HKKRDAGSFF (330 aa)) enclose the Protein kinase domain. ATP contacts are provided by residues 154 to 162 (LGAASLAQV) and Lys-176. Asp-308 serves as the catalytic Proton acceptor.

It belongs to the protein kinase superfamily. ADCK protein kinase family.

Its subcellular location is the mitochondrion. Functionally, appears to be essential for maintaining mitochondrial cristae formation and mitochondrial function by acting via YME1L1 in a kinase-independent manner to regulate essential mitochondrial structural proteins OPA1 and IMMT. The action of this enzyme is not yet clear. It is not known if it has protein kinase activity and what type of substrate it would phosphorylate (Ser, Thr or Tyr). This Mus musculus (Mouse) protein is AarF domain-containing protein kinase 1 (Adck1).